Reading from the N-terminus, the 269-residue chain is tRNA pseudouridine synthase A (269 aa).

Aspartate 51 functions as the Nucleophile in the catalytic mechanism. Tyrosine 109 is a substrate binding site.

Belongs to the tRNA pseudouridine synthase TruA family. As to quaternary structure, homodimer.

The enzyme catalyses uridine(38/39/40) in tRNA = pseudouridine(38/39/40) in tRNA. Functionally, formation of pseudouridine at positions 38, 39 and 40 in the anticodon stem and loop of transfer RNAs. The sequence is that of tRNA pseudouridine synthase A from Histophilus somni (strain 2336) (Haemophilus somnus).